The sequence spans 157 residues: 2-C-methyl-D-erythritol 2,4-cyclodiphosphate synthase (157 aa).

2 residues coordinate a divalent metal cation: Asp8 and His10. Residues 8–10 (DIH) and 34–35 (HS) each bind 4-CDP-2-C-methyl-D-erythritol 2-phosphate. His42 is a binding site for a divalent metal cation. Residues 56-58 (DIG), 61-65 (FPDTD), 132-135 (TTNE), and Arg142 contribute to the 4-CDP-2-C-methyl-D-erythritol 2-phosphate site.

The protein belongs to the IspF family. Homotrimer. It depends on a divalent metal cation as a cofactor.

It carries out the reaction 4-CDP-2-C-methyl-D-erythritol 2-phosphate = 2-C-methyl-D-erythritol 2,4-cyclic diphosphate + CMP. The protein operates within isoprenoid biosynthesis; isopentenyl diphosphate biosynthesis via DXP pathway; isopentenyl diphosphate from 1-deoxy-D-xylulose 5-phosphate: step 4/6. In terms of biological role, involved in the biosynthesis of isopentenyl diphosphate (IPP) and dimethylallyl diphosphate (DMAPP), two major building blocks of isoprenoid compounds. Catalyzes the conversion of 4-diphosphocytidyl-2-C-methyl-D-erythritol 2-phosphate (CDP-ME2P) to 2-C-methyl-D-erythritol 2,4-cyclodiphosphate (ME-CPP) with a corresponding release of cytidine 5-monophosphate (CMP). The protein is 2-C-methyl-D-erythritol 2,4-cyclodiphosphate synthase of Chloroherpeton thalassium (strain ATCC 35110 / GB-78).